Here is a 389-residue protein sequence, read N- to C-terminus: MSRICYLDCFSGVSGDMLLGAFLDAGVEVAALEAGLAALHLDDLILRTKRVEDCGLSAIKVDVDSSRRQNLRTLPDLLRILQESDLSSLVQERAALVFTAIASAEAKVHGTSLEQVHFHEIGALDTIADVVGVVLCLELLQIDQLVCSPLPQPRGFIDCAHGRIPLPAPAVCEILRGVPSYGVALEQELVTPTGAALVKALVGAFGQFPPMQQLAVGYGAGSQRLANGQPNLLRIFVGTPDDVLEEQQVEVIETNLDDWNPESYPYLCERLFEHGALDVSLAPIQMKKGRPGFCLQVIAGREDSAQLKDIVLLETTALGLRFRFEYRRTLPRRELHIESPWGTMRVKEVQRGGRRVIIPEYEECRRVAGEYDLPLQEVYGRIQGLNFYE.

This sequence belongs to the LarC family.

This is Putative nickel insertion protein from Desulfotalea psychrophila (strain LSv54 / DSM 12343).